Consider the following 203-residue polypeptide: LexA repressor 2 (203 aa).

Positions 28–48 (MREIARHLNVNGTLGVAKHLE) form a DNA-binding region, H-T-H motif. Active-site for autocatalytic cleavage activity residues include S122 and K159.

This sequence belongs to the peptidase S24 family. As to quaternary structure, homodimer.

The enzyme catalyses Hydrolysis of Ala-|-Gly bond in repressor LexA.. Its function is as follows. Represses a number of genes involved in the response to DNA damage (SOS response), including recA and lexA. In the presence of single-stranded DNA, RecA interacts with LexA causing an autocatalytic cleavage which disrupts the DNA-binding part of LexA, leading to derepression of the SOS regulon and eventually DNA repair. The polypeptide is LexA repressor 2 (Geobacter sulfurreducens (strain ATCC 51573 / DSM 12127 / PCA)).